The chain runs to 376 residues: MGHIRSIRLALAVAAVCTAASAAAGDAKFPPLGPLPPVPVPADNPMTADKVALGKQLFWDNRLSGDGSTPCVSCHLPALGWGDGGAISRGYPGTKHWRNSQTIVNSAYYNKLFWAGSVTSLEAQAPSAAEGGVAGNGDRSLMEMRLRFIPEYVAAFKNVFGADWPRMTQAYAAIAAYQRTVVSDATRVPFDRWQAGDKAAMSAEAQRGYALFSGKAGCIACHNGPLASDQRFYNLGLPEHPDLAEDPLLQITHRWEQYQKGTTEDGYRHADRDKGYYYQTKNPKDIGKFRTPSLREVKYTGPYMHNGTLATLDEVVAFYNAGGGTAPGKTDKLKPLGLTEQESKDLVAFVEALSMTEPLIHDDPKLPGDYQPLATQ.

Positions Met-1–Ala-24 are cleaved as a signal peptide. 2 Cytochrome c domains span residues Asp-49–Lys-157 and Ala-203–Ser-354. 6 residues coordinate heme c: Cys-71, Cys-74, His-75, Cys-218, Cys-221, and His-222.

The iodate reductase (Idr) complex is composed of a molybdopterin-dependent iodate reductase (IdrA and IdrB subunits) and two associated peroxidases (IdrP1 and IdrP2). It depends on heme c as a cofactor.

It is found in the periplasm. The enzyme catalyses 2 Fe(II)-[cytochrome c] + H2O2 + 2 H(+) = 2 Fe(III)-[cytochrome c] + 2 H2O. In terms of biological role, involved in iodate respiration. May play a critical role in detoxification of inadvertent H(2)O(2) generated by the iodate reductase IdrA/IdrB. The protein is Cytochrome-c peroxidase IdrP1 of Denitromonas iodatirespirans.